The sequence spans 174 residues: RNA pyrophosphohydrolase (174 aa).

The 144-residue stretch at 6–149 (GYRPNVGIIL…KRDVYLGALK (144 aa)) folds into the Nudix hydrolase domain. Positions 38–59 (GGIKPGESPETAMYRELYEEVG) match the Nudix box motif.

This sequence belongs to the Nudix hydrolase family. RppH subfamily. It depends on a divalent metal cation as a cofactor.

In terms of biological role, accelerates the degradation of transcripts by removing pyrophosphate from the 5'-end of triphosphorylated RNA, leading to a more labile monophosphorylated state that can stimulate subsequent ribonuclease cleavage. In Neisseria meningitidis serogroup B (strain ATCC BAA-335 / MC58), this protein is RNA pyrophosphohydrolase.